The following is a 282-amino-acid chain: Osteoclast-associated immunoglobulin-like receptor (282 aa).

An N-terminal signal peptide occupies residues 1-18 (MALVLILQLLTLWPLCHT). Ig-like domains are found at residues 22-116 (PSVP…SQPS) and 126-219 (ELPR…SWEG). N-linked (GlcNAc...) asparagine glycosylation is present at Asn48. Cys53 and Cys100 are joined by a disulfide. Residue Asn145 is glycosylated (N-linked (GlcNAc...) asparagine). Residues 221 to 282 (GPEARPASSA…PAPPPSDPGV (62 aa)) are disordered. Residues 273–282 (PAPPPSDPGV) show a composition bias toward pro residues.

This sequence belongs to the leukocyte receptor complex/polymeric immunoglobulin receptor (PIR/LRC) family.

Its subcellular location is the secreted. It localises to the cell membrane. In terms of biological role, regulator of osteoclastogenesis which plays an important bone-specific function in osteoclast differentiation. The polypeptide is Osteoclast-associated immunoglobulin-like receptor (OSCAR) (Homo sapiens (Human)).